Here is a 263-residue protein sequence, read N- to C-terminus: 4-hydroxy-tetrahydrodipicolinate reductase (263 aa).

NAD(+) contacts are provided by residues 7–12 (GFKGRM), 96–98 (GTT), and 122–125 (APNF). His-152 (proton donor/acceptor) is an active-site residue. His-153 serves as a coordination point for (S)-2,3,4,5-tetrahydrodipicolinate. The Proton donor role is filled by Lys-156. Residue 162–163 (GT) participates in (S)-2,3,4,5-tetrahydrodipicolinate binding.

It belongs to the DapB family.

It localises to the cytoplasm. It carries out the reaction (S)-2,3,4,5-tetrahydrodipicolinate + NAD(+) + H2O = (2S,4S)-4-hydroxy-2,3,4,5-tetrahydrodipicolinate + NADH + H(+). The enzyme catalyses (S)-2,3,4,5-tetrahydrodipicolinate + NADP(+) + H2O = (2S,4S)-4-hydroxy-2,3,4,5-tetrahydrodipicolinate + NADPH + H(+). It functions in the pathway amino-acid biosynthesis; L-lysine biosynthesis via DAP pathway; (S)-tetrahydrodipicolinate from L-aspartate: step 4/4. Functionally, catalyzes the conversion of 4-hydroxy-tetrahydrodipicolinate (HTPA) to tetrahydrodipicolinate. The polypeptide is 4-hydroxy-tetrahydrodipicolinate reductase (Listeria monocytogenes serovar 1/2a (strain ATCC BAA-679 / EGD-e)).